The primary structure comprises 321 residues: MPAPVPPTAFAQPSGPATQLVLGSMQRAPEYQALLTSLKSAAPPSSSVQGEMVDRILDNATTLPPPPLTIHLVLPLPLPPNLLSAIPPSTQIFIHIPADSESQLGALHSALASHSFTPVLPTPSPSTLAYTSPSAPSLPTVASDPSPAPSSSTPVTLSGARPLQLRRNGDKARKAALWAIDSPLIPDGGKSLLTPADRTRPDCVFPAENGKPVKRRRACKDCTCGLKELEQEEEAQTSAAVQEAQKAFFLEGDDDIPENLKKATEGMEGIWPADKRAEAKKTSSCGSCYLGDAFRCSSCPYLGLPPFKPGEQVQVSIGDDI.

Residues 1–161 (MPAPVPPTAF…STPVTLSGAR (161 aa)) form an N-terminal SAM-like domain region. Residues 123–168 (PSPSTLAYTSPSAPSLPTVASDPSPAPSSSTPVTLSGARPLQLRRN) are disordered. The span at 139-156 (PTVASDPSPAPSSSTPVT) shows a compositional bias: low complexity. The segment at 162 to 197 (PLQLRRNGDKARKAALWAIDSPLIPDGGKSLLTPAD) is linker. The [2Fe-2S] cluster site is built by C203, C219, C222, and C224. A fe-S binding site A region spans residues 203–224 (CVFPAENGKPVKRRRACKDCTC). Residues C285, C288, C296, and C299 each contribute to the [4Fe-4S] cluster site. Short sequence motifs (cx2C motif) lie at residues 285–288 (CGSC) and 296–299 (CSSC). The fe-S binding site B stretch occupies residues 285–299 (CGSCYLGDAFRCSSC).

It belongs to the anamorsin family. In terms of assembly, monomer. Interacts with TAH18. Interacts with MIA40. The cofactor is [2Fe-2S] cluster. It depends on [4Fe-4S] cluster as a cofactor.

The protein resides in the cytoplasm. The protein localises to the mitochondrion intermembrane space. In terms of biological role, component of the cytosolic iron-sulfur (Fe-S) protein assembly (CIA) machinery required for the maturation of extramitochondrial Fe-S proteins. Part of an electron transfer chain functioning in an early step of cytosolic Fe-S biogenesis, facilitating the de novo assembly of a [4Fe-4S] cluster on the scaffold complex CFD1-NBP35. Electrons are transferred to DRE2 from NADPH via the FAD- and FMN-containing protein TAH18. TAH18-DRE2 are also required for the assembly of the diferric tyrosyl radical cofactor of ribonucleotide reductase (RNR), probably by providing electrons for reduction during radical cofactor maturation in the catalytic small subunit RNR2. The polypeptide is Fe-S cluster assembly protein DRE2 (Cryptococcus neoformans var. neoformans serotype D (strain B-3501A) (Filobasidiella neoformans)).